The sequence spans 52 residues: Large ribosomal subunit protein bL32c (52 aa).

This sequence belongs to the bacterial ribosomal protein bL32 family.

The protein localises to the plastid. The protein resides in the chloroplast. The chain is Large ribosomal subunit protein bL32c from Olimarabidopsis pumila (Dwarf rocket).